The sequence spans 636 residues: Putative lipase ATG15 (636 aa).

Residues 1–19 (MYKYGTVVDPAMTTNRRSR) lie on the Cytoplasmic side of the membrane. Residues 20-42 (LSGFRCASTARVTATLLLSFLAF) form a helical; Signal-anchor for type II membrane protein membrane-spanning segment. The Lumenal segment spans residues 43-636 (SPSSASSDFG…DDLEFATDEM (594 aa)). Residues Asn211, Asn233, Asn291, Asn315, and Asn477 are each glycosylated (N-linked (GlcNAc...) asparagine). The disordered stretch occupies residues 478–500 (GTETTTTSSPSTTSTTRTRTRTS). The span at 479–500 (TETTTTSSPSTTSTTRTRTRTS) shows a compositional bias: low complexity.

This sequence belongs to the AB hydrolase superfamily. Lipase family. Binds to both phosphatidylinositol (PI) and phosphatidylinositol 3,5-bisphosphate (PIP2).

It is found in the endosome. The protein localises to the multivesicular body membrane. It localises to the prevacuolar compartment membrane. The enzyme catalyses a triacylglycerol + H2O = a diacylglycerol + a fatty acid + H(+). Lipase which is essential for lysis of subvacuolar cytoplasm to vacuole targeted bodies and intravacuolar autophagic bodies. Involved in the lysis of intravacuolar multivesicular body (MVB) vesicles. The intravacuolar membrane disintegration by ATG15 is critical to life span extension. Autophagy is required for proper vegetative growth, asexual/sexual reproduction, and full virulence. Autophagy is particularly involved in the biosynthesis of deoxynivalenol (DON), an important virulence determinant. The polypeptide is Putative lipase ATG15 (Gibberella zeae (strain ATCC MYA-4620 / CBS 123657 / FGSC 9075 / NRRL 31084 / PH-1) (Wheat head blight fungus)).